The sequence spans 448 residues: Tubulin beta chain (448 aa).

Positions 11, 69, 138, 142, 143, 144, 204, and 226 each coordinate GTP. Residue Glu69 coordinates Mg(2+). The disordered stretch occupies residues 425–448 (YQDASISEGEEEYLEEEEPLEHEE). A compositionally biased stretch (acidic residues) spans 432-448 (EGEEEYLEEEEPLEHEE).

The protein belongs to the tubulin family. As to quaternary structure, dimer of alpha and beta chains. A typical microtubule is a hollow water-filled tube with an outer diameter of 25 nm and an inner diameter of 15 nM. Alpha-beta heterodimers associate head-to-tail to form protofilaments running lengthwise along the microtubule wall with the beta-tubulin subunit facing the microtubule plus end conferring a structural polarity. Microtubules usually have 13 protofilaments but different protofilament numbers can be found in some organisms and specialized cells. Mg(2+) serves as cofactor.

It localises to the cytoplasm. The protein resides in the cytoskeleton. Tubulin is the major constituent of microtubules, a cylinder consisting of laterally associated linear protofilaments composed of alpha- and beta-tubulin heterodimers. Microtubules grow by the addition of GTP-tubulin dimers to the microtubule end, where a stabilizing cap forms. Below the cap, tubulin dimers are in GDP-bound state, owing to GTPase activity of alpha-tubulin. This Aspergillus flavus protein is Tubulin beta chain.